Reading from the N-terminus, the 231-residue chain is Cytidylate kinase (231 aa).

18–26 (GPSGTGKSS) is an ATP binding site.

The protein belongs to the cytidylate kinase family. Type 1 subfamily.

It is found in the cytoplasm. The catalysed reaction is CMP + ATP = CDP + ADP. It carries out the reaction dCMP + ATP = dCDP + ADP. This Streptomyces avermitilis (strain ATCC 31267 / DSM 46492 / JCM 5070 / NBRC 14893 / NCIMB 12804 / NRRL 8165 / MA-4680) protein is Cytidylate kinase.